The sequence spans 654 residues: Neuroendocrine convertase 2 (654 aa).

The N-terminal stretch at 1 to 21 is a signal peptide; that stretch reads MAAATWSWLLAPFLLLHWASA. The propeptide occupies 22–121; it reads GAGGGAGGSG…VQQPGFKRVK (100 aa). A Peptidase S8 domain is found at 158 to 483; that stretch reads QWYLKNTGQN…FGVLDAGAMV (326 aa). N-linked (GlcNAc...) asparagine glycosylation occurs at N189. Residues D196 and H237 each act as charge relay system in the active site. Cystine bridges form between C254/C404 and C346/C376. N-linked (GlcNAc...) asparagine glycosylation is present at N312. S412 (charge relay system) is an active-site residue. A P/Homo B domain is found at 491–627; the sequence is SVPPRYHCEA…SLVLHGTKEA (137 aa). A disulfide bridge links C498 with C524. N544 carries an N-linked (GlcNAc...) asparagine glycan.

It belongs to the peptidase S8 family. Furin subfamily. In terms of tissue distribution, expressed in the central nervous system (CNS) and midgut endocrine cells of third instar larva (at protein level). In the CNS, expressed in the CA-LP1 and CA-LP2 neurons which innervate the corpus allatum, and in the CC-MS2 neurons which innervate the corpora cardiaca of the ring gland. Also expressed in the CC-MS1, SP3, Tv and Va neurons. Expressed in Akh-producing cells of the corpora cardiaca. In the embryo, restricted to the final stages of embryogenesis where expression is found in anterior sensory structures and in only 168 cells in the brain and ventral nerve cord. After larvae hatch, the sensory structures and most cells in the CNS turn off or substantially reduce expression. In third instar larva, expressed at higher levels in the anterior section than in the posterior section. Little expression is detected in the adult head. In the developing eye, expressed at higher levels in pale-type R7 photoreceptor cells than in yellow-type R7 cells although expression is not seen in all pale-type R7 cells. Also expressed in outer photoreceptor cells.

Its subcellular location is the secreted. The catalysed reaction is Release of protein hormones and neuropeptides from their precursors, generally by hydrolysis of -Lys-Arg-|- bonds.. Serine endopeptidase which is involved in the processing of hormone and other protein precursors at sites comprised of pairs of basic amino acid residues. Required during embryonic and larval development, probably by proteolytically processing peptide hormones involved in hatching, larval growth and larval molting. Required for the processing and activation of Akh which maintains normal hemolymph sugar levels. Has been shown in one study to be required for processing of sli into slit N-product and slit C-product in the embryo which is necessary for lateral transverse muscle elongation but has been shown in another study not to be required for sli cleavage. Required for larval hatching. Also required for normal larval wandering behavior which occurs prior to pupariation. Required during pupal development for head eversion, leg and wing disk extension, and abdominal differentiation. Required during eye development for R8 photoreceptor cell specification by regulating processing of ligands required for the BMP and activin signaling pathways. The chain is Neuroendocrine convertase 2 from Drosophila melanogaster (Fruit fly).